Consider the following 321-residue polypeptide: MRRSSGFGGQKGQGPSCSFTGCWCCRGDDVAESDDSPFAQCGYNIQEKHLGKLHRAASRGEVSKVECILSSGSADLDERDKKKRTALHLACANGHPEVVALLVDRGCQLDVFDNKNRTALLKAVQCQEEECATILLEHGADPDLPDVYGNTTLHYAIYNEDIPMTKKLLLHHANIESANKDELTPFLLAVHEQKQQMEDFLRKQKENLTAVKLESIHQVMSEYKENETPRNPQNSNPEGTSNKMACLGEGAAGAKVDEIPGNPVKRLFNKPSIDDSRPMSANEDFDFDTEEKATEPANGKRQNGMGIIESAPQEHTNNENI.

5 ANK repeats span residues 48 to 78 (KHLGKLHRAASRGEVSKVECILSSGSADLDE), 82 to 111 (KKRTALHLACANGHPEVVALLVDRGCQLDV), 115 to 144 (KNRTALLKAVQCQEEECATILLEHGADPDL), 148 to 177 (YGNTTLHYAIYNEDIPMTKKLLLHHANIES), and 181 to 210 (DELTPFLLAVHEQKQQMEDFLRKQKENLTA). Disordered regions lie at residues 222-242 (EYKENETPRNPQNSNPEGTSN) and 268-321 (FNKP…NENI). Residues 229 to 242 (PRNPQNSNPEGTSN) are compositionally biased toward polar residues.

The sequence is that of Putative ankyrin repeat domain-containing protein 26-like protein (ANKRD26P1) from Homo sapiens (Human).